The following is a 432-amino-acid chain: Glutamyl-tRNA reductase (432 aa).

Residues 49–52 (TCNR), Ser109, 114–116 (EGQ), and Gln120 contribute to the substrate site. Cys50 acts as the Nucleophile in catalysis. 189 to 194 (GAGKMS) provides a ligand contact to NADP(+).

It belongs to the glutamyl-tRNA reductase family. In terms of assembly, homodimer.

The protein resides in the plastid. It localises to the cyanelle. It catalyses the reaction (S)-4-amino-5-oxopentanoate + tRNA(Glu) + NADP(+) = L-glutamyl-tRNA(Glu) + NADPH + H(+). Its pathway is porphyrin-containing compound metabolism; protoporphyrin-IX biosynthesis; 5-aminolevulinate from L-glutamyl-tRNA(Glu): step 1/2. It functions in the pathway porphyrin-containing compound metabolism; chlorophyll biosynthesis. Functionally, catalyzes the NADPH-dependent reduction of glutamyl-tRNA(Glu) to glutamate 1-semialdehyde (GSA). The sequence is that of Glutamyl-tRNA reductase from Cyanophora paradoxa.